The following is a 396-amino-acid chain: Transcription factor E2FC (396 aa).

A compositionally biased stretch (polar residues) spans 34–48 (PRYSSLTPSSTNRPF). The interval 34–57 (PRYSSLTPSSTNRPFSVSQSLPNS) is disordered. The DNA-binding element occupies 155–220 (RYDSSLGLLT…TTKNHIRWKG (66 aa)). Residues 226–268 (QKDLGDQISRLKSEVESMQSEESRLDDLIRERQEALRSLEEDD) adopt a coiled-coil conformation. The interval 236 to 264 (LKSEVESMQSEESRLDDLIRERQEALRSL) is leucine-zipper. The interval 376–391 (DYWFESDAEVSLTDLW) is retinoblastoma protein binding.

This sequence belongs to the E2F/DP family. As to quaternary structure, heterodimer with DP proteins. Interacts preferentially with DPB, but also with DPA. No interaction with DPB when phosphorylated. Interacts with SKP2A, CDKA-1 and maize retinoblastoma-related protein RBR1. Component of a DREAM-like complex which modulates a variety of developmentally regulated genes and of the mitotic genes in proliferating and differentiated cells. Interacts with MYB3R3 at later stages of leaves development. Phosphorylated by cyclin-dependent kinase. Phosphorylation is necessary to target E2FC for proteolysis. In terms of tissue distribution, expressed in meristematic areas, vascular tissues, apical part of the roots, cotyledons, upper region of the hypocotyls, trichomes, young flower buds and pollen grains.

It localises to the cytoplasm. Involved in transcriptional repression. May act by repressing E2F-regulated genes in mature differentiated cells, but is not an antagonist of E2FA. Restricts cell division and is involved in the coordination between cell proliferation and endoreduplication during development. May play a role during the transition from skotomorphogenesis to photomorphogenesis. Regulated by phosphorylation-dependent proteolysis via the protein-ubiquitin ligase SCF(SKP2A) complex. This Arabidopsis thaliana (Mouse-ear cress) protein is Transcription factor E2FC (E2FC).